The primary structure comprises 156 residues: MKVIEGGFPAPNAKIAIVISRFNSFINESLLSGAIDTLKRHGQISDDNITVVRCPGAVELPLVAQRVAKTGDYDAIVSLGCVIRGGTPHFDYVCSEMNKGLAQVSLEFSIPVAFGVLTVDTIDQAIERAGTKAGNKGAEAALSALEMINVLSEIDS.

Residues Phe22, 57–59 (AVE), and 81–83 (CVI) contribute to the 5-amino-6-(D-ribitylamino)uracil site. 86–87 (GT) contributes to the (2S)-2-hydroxy-3-oxobutyl phosphate binding site. Catalysis depends on His89, which acts as the Proton donor. Phe114 provides a ligand contact to 5-amino-6-(D-ribitylamino)uracil. Arg128 is a binding site for (2S)-2-hydroxy-3-oxobutyl phosphate.

The protein belongs to the DMRL synthase family. As to quaternary structure, forms an icosahedral capsid composed of 60 subunits, arranged as a dodecamer of pentamers.

The catalysed reaction is (2S)-2-hydroxy-3-oxobutyl phosphate + 5-amino-6-(D-ribitylamino)uracil = 6,7-dimethyl-8-(1-D-ribityl)lumazine + phosphate + 2 H2O + H(+). It participates in cofactor biosynthesis; riboflavin biosynthesis; riboflavin from 2-hydroxy-3-oxobutyl phosphate and 5-amino-6-(D-ribitylamino)uracil: step 1/2. Its function is as follows. Catalyzes the formation of 6,7-dimethyl-8-ribityllumazine by condensation of 5-amino-6-(D-ribitylamino)uracil with 3,4-dihydroxy-2-butanone 4-phosphate. This is the penultimate step in the biosynthesis of riboflavin. The protein is 6,7-dimethyl-8-ribityllumazine synthase of Vibrio cholerae serotype O1 (strain ATCC 39315 / El Tor Inaba N16961).